The following is a 277-amino-acid chain: Ribosomally synthesized cyclic peptide asperipin-2a precursor aprA (277 aa).

Residues 1–19 (MHLSRYIAVLLSASSFVSA) form the signal peptide. Propeptides lie at residues 20–69 (LPLQ…LDKR), 76–88 (KRNA…LDKR), 95–107 (KRNA…LDKR), 114–126 (KRNA…LDKR), 133–145 (KRNA…LDKR), 152–164 (KRNA…LDKR), 171–183 (KRNA…LDKR), 190–202 (KRNA…LDKR), 209–221 (KRNA…LDKR), 228–240 (KRNA…LDKR), 247–259 (KRNA…LDKR), and 266–277 (KRNAETPEDLDK).

AprA is processed by kexin proteases to produce 11 identical copies of the hexapeptide Phe-Tyr-Tyr-Thr-Gly-Tyr, that is further modified aprY and aprR to yield asperipin-2a. The bicyclic structure of asperipin-2a is likely synthesized by the single ustYa family oxidase aprY. The reductase aprR may be required for the final reduction to yield asperipin-2a.

The protein operates within secondary metabolite biosynthesis. Its function is as follows. Ribosomally synthesized cyclic peptide asperipin-2a precursor; part of the gene cluster that mediates the biosynthesis of the asperipin-2a, a bicyclic peptide that possesses two macrocyclic ether rings consisting of 14- and 17-membered paracyclophans. The aprA translated product contains a 11-fold repeated peptide embedding the hexapeptide Phe-Tyr-Tyr-Thr-Gly-Tyr, that is converted into asperipin-2a. After being excised from the precursor peptide by kexin proteases, the core peptides are cyclized and modified post-translationally by enzymes encoded within the corresponding gene cluster. The sequence is that of Ribosomally synthesized cyclic peptide asperipin-2a precursor aprA from Aspergillus flavus (strain ATCC 200026 / FGSC A1120 / IAM 13836 / NRRL 3357 / JCM 12722 / SRRC 167).